A 461-amino-acid chain; its full sequence is Cysteine--tRNA ligase (461 aa).

Cys28 contacts Zn(2+). A 'HIGH' region motif is present at residues 30 to 40 (VTIYDLCHIGH). Zn(2+)-binding residues include Cys209, His234, and Glu238. A 'KMSKS' region motif is present at residues 266–270 (KMSKS). Lys269 serves as a coordination point for ATP.

This sequence belongs to the class-I aminoacyl-tRNA synthetase family. As to quaternary structure, monomer. Zn(2+) serves as cofactor.

Its subcellular location is the cytoplasm. It catalyses the reaction tRNA(Cys) + L-cysteine + ATP = L-cysteinyl-tRNA(Cys) + AMP + diphosphate. The sequence is that of Cysteine--tRNA ligase from Serratia proteamaculans (strain 568).